The following is a 517-amino-acid chain: Crotonobetaine/carnitine--CoA ligase (517 aa).

Belongs to the ATP-dependent AMP-binding enzyme family.

It carries out the reaction 4-(trimethylamino)butanoate + ATP + CoA = 4-(trimethylamino)butanoyl-CoA + AMP + diphosphate. The enzyme catalyses crotonobetaine + ATP + CoA = crotonobetainyl-CoA + AMP + diphosphate. The catalysed reaction is (R)-carnitine + ATP + CoA = (R)-carnitinyl-CoA + AMP + diphosphate. It participates in amine and polyamine metabolism; carnitine metabolism. Catalyzes the transfer of CoA to carnitine, generating the initial carnitinyl-CoA needed for the CaiB reaction cycle. Also has activity toward crotonobetaine and gamma-butyrobetaine. The sequence is that of Crotonobetaine/carnitine--CoA ligase from Salmonella typhi.